The sequence spans 414 residues: NADH-ubiquinone oxidoreductase chain 4 (414 aa).

Transmembrane regions (helical) follow at residues 18–38 (LVQL…MIGV), 47–67 (IAAF…LMSI), 96–116 (IIFI…PLHL), 126–146 (PTAG…YGYI), 160–180 (YFPI…IATL), 188–208 (IVAY…FSGV), 216–236 (IILM…IGVI), 254–274 (MMPI…AFPI), 293–313 (IIIA…SFWL), and 375–395 (VNIF…IVGM).

The protein belongs to the complex I subunit 4 family.

The protein localises to the mitochondrion membrane. It catalyses the reaction a ubiquinone + NADH + 5 H(+)(in) = a ubiquinol + NAD(+) + 4 H(+)(out). Functionally, core subunit of the mitochondrial membrane respiratory chain NADH dehydrogenase (Complex I) that is believed to belong to the minimal assembly required for catalysis. Complex I functions in the transfer of electrons from NADH to the respiratory chain. The immediate electron acceptor for the enzyme is believed to be ubiquinone. The polypeptide is NADH-ubiquinone oxidoreductase chain 4 (nad4) (Dictyostelium citrinum (Slime mold)).